The following is a 131-amino-acid chain: Ribosome-binding factor A (131 aa).

Belongs to the RbfA family. Monomer. Binds 30S ribosomal subunits, but not 50S ribosomal subunits or 70S ribosomes.

The protein resides in the cytoplasm. In terms of biological role, one of several proteins that assist in the late maturation steps of the functional core of the 30S ribosomal subunit. Associates with free 30S ribosomal subunits (but not with 30S subunits that are part of 70S ribosomes or polysomes). Required for efficient processing of 16S rRNA. May interact with the 5'-terminal helix region of 16S rRNA. The polypeptide is Ribosome-binding factor A (Ruegeria sp. (strain TM1040) (Silicibacter sp.)).